A 267-amino-acid chain; its full sequence is Phosphatidylglycerol--prolipoprotein diacylglyceryl transferase (267 aa).

Transmembrane regions (helical) follow at residues 17-37 (LNIR…WLLA), 56-76 (LVTY…TLFY), 91-111 (IWNG…AIWL), 120-140 (LFEV…AGRL), 173-193 (QLYE…LFSA), 199-219 (MAVS…VEFF), and 236-256 (MGQI…GFAM). Arg139 is a binding site for a 1,2-diacyl-sn-glycero-3-phospho-(1'-sn-glycerol).

It belongs to the Lgt family.

The protein resides in the cell inner membrane. The enzyme catalyses L-cysteinyl-[prolipoprotein] + a 1,2-diacyl-sn-glycero-3-phospho-(1'-sn-glycerol) = an S-1,2-diacyl-sn-glyceryl-L-cysteinyl-[prolipoprotein] + sn-glycerol 1-phosphate + H(+). The protein operates within protein modification; lipoprotein biosynthesis (diacylglyceryl transfer). In terms of biological role, catalyzes the transfer of the diacylglyceryl group from phosphatidylglycerol to the sulfhydryl group of the N-terminal cysteine of a prolipoprotein, the first step in the formation of mature lipoproteins. This is Phosphatidylglycerol--prolipoprotein diacylglyceryl transferase from Oleidesulfovibrio alaskensis (strain ATCC BAA-1058 / DSM 17464 / G20) (Desulfovibrio alaskensis).